The sequence spans 72 residues: Mitotic-spindle organizing protein 1 (72 aa).

The protein belongs to the MOZART1 family. As to quaternary structure, part of the gamma-tubulin complex.

Its subcellular location is the cytoplasm. The protein resides in the cytoskeleton. It is found in the microtubule organizing center. The protein localises to the centrosome. It localises to the spindle. Its function is as follows. Required for gamma-tubulin complex recruitment to the centrosome. The sequence is that of Mitotic-spindle organizing protein 1 (mzt1) from Xenopus laevis (African clawed frog).